Here is a 216-residue protein sequence, read N- to C-terminus: GTP cyclohydrolase-2 (216 aa).

A GTP-binding site is contributed by 50–54; that stretch reads RIHSE. Cysteine 55, cysteine 66, and cysteine 68 together coordinate Zn(2+). Residues glutamine 71, 93-95, and threonine 115 each bind GTP; that span reads EGR. Residue aspartate 127 is the Proton acceptor of the active site. Arginine 129 functions as the Nucleophile in the catalytic mechanism. GTP-binding residues include threonine 150 and lysine 155.

Belongs to the GTP cyclohydrolase II family. Zn(2+) is required as a cofactor.

The enzyme catalyses GTP + 4 H2O = 2,5-diamino-6-hydroxy-4-(5-phosphoribosylamino)-pyrimidine + formate + 2 phosphate + 3 H(+). It participates in cofactor biosynthesis; riboflavin biosynthesis; 5-amino-6-(D-ribitylamino)uracil from GTP: step 1/4. Catalyzes the conversion of GTP to 2,5-diamino-6-ribosylamino-4(3H)-pyrimidinone 5'-phosphate (DARP), formate and pyrophosphate. This chain is GTP cyclohydrolase-2, found in Histophilus somni (strain 129Pt) (Haemophilus somnus).